A 770-amino-acid chain; its full sequence is Protein PAT1 homolog 1 (770 aa).

Residues 1–26 (MFRYESLEDCPLDEDEDAFQGLGEED) are disordered. The tract at residues 1 to 84 (MFRYESLEDC…EMDLLGDHEE (84 aa)) is region A; interaction with DDX6/RCK. Residues 1 to 397 (MFRYESLEDC…HRSSHQDHLR (397 aa)) form an involved in nuclear foci localization region. Acidic residues predominate over residues 7-26 (LEDCPLDEDEDAFQGLGEED). Positions 85-388 (NLAERLSKMV…LNGAGDRGSH (304 aa)) are region N; interaction with decapping machinery. Positions 86-95 (LAERLSKMVI) match the Nuclear export signal motif. Ser177 is modified (phosphoserine). Position 178 is a phosphothreonine (Thr178). Phosphoserine is present on residues Ser179 and Ser184. Residue Thr194 is modified to Phosphothreonine. 3 positions are modified to asymmetric dimethylarginine: Arg217, Arg223, and Arg263. The interval 223–397 (RYPAPYGERM…HRSSHQDHLR (175 aa)) is involved in RNA-binding. Ser278 carries the phosphoserine modification. Arg284 carries the post-translational modification Asymmetric dimethylarginine. Disordered regions lie at residues 315–344 (FRAF…QNLR) and 360–400 (QHRR…RKDP). Pro residues predominate over residues 324–337 (SATPPPQQHPPGPG). Over residues 367-380 (QRQQQNRNQHRNLN) the composition is skewed to low complexity. Arg385 is subject to Omega-N-methylarginine. A compositionally biased stretch (basic and acidic residues) spans 385–400 (RGSHRSSHQDHLRKDP). The interval 389 to 448 (RSSHQDHLRKDPYANLMLQREKDWVSKIQMMQLQSTDPYLDDFYYQNYFEKLEKLSAAEE) is region H. Positions 398 to 770 (KDPYANLMLQ…TKLQLVQGIR (373 aa)) are involved in nuclear speckle localization. Positions 449-770 (IQGDGPKKER…TKLQLVQGIR (322 aa)) are region C.

It belongs to the PAT1 family. In terms of assembly, interacts (via region A) with DDX6/RCK. Interacts (via region H and region C) with LSM1 and LSM4. Interacts (via region N) with DCP1A, DCP2, EDC3, EDC4 and XRN1. Interacts with the CCR4-NOT complex. Interacts with the Lsm-containing SMN-Sm protein complex. Interacts with EIF4ENIF1/4E-T.

The protein localises to the cytoplasm. The protein resides in the P-body. It localises to the nucleus. Its subcellular location is the PML body. It is found in the nucleus speckle. Functionally, RNA-binding protein involved in deadenylation-dependent decapping of mRNAs, leading to the degradation of mRNAs. Acts as a scaffold protein that connects deadenylation and decapping machinery. Required for cytoplasmic mRNA processing body (P-body) assembly. This Pongo abelii (Sumatran orangutan) protein is Protein PAT1 homolog 1 (PATL1).